The chain runs to 292 residues: (S)-phenoxypropionate/alpha-ketoglutarate-dioxygenase (292 aa).

His-108 and Asp-110 together coordinate Fe cation. Residues Thr-135 and Trp-247 each coordinate 2-oxoglutarate. His-262 serves as a coordination point for Fe cation. Arg-273 provides a ligand contact to 2-oxoglutarate.

This sequence belongs to the TfdA dioxygenase family. In terms of assembly, monomer. Fe cation is required as a cofactor. L-ascorbate serves as cofactor.

It catalyses the reaction (S)-2-(4-chloro-2-methylphenoxy)propanoate + 2-oxoglutarate + O2 = 2-methyl-4-chlorophenol + pyruvate + succinate + CO2. The enzyme catalyses (S)-(2,4-dichlorophenoxy)propanoate + 2-oxoglutarate + O2 = 2,4-dichlorophenol + pyruvate + succinate + CO2. It participates in xenobiotic degradation; 2-(2,4-dichlorophenoxy)propanoate degradation. Inhibited by divalent cations, most significantly by copper and nickel, and by diethylpyrocarbonate (DEPC). Functionally, involved in the degradation of the phenoxypropionate herbicides. Catalyzes the enantiospecific cleavage of the ether bond in the herbicid S-dichlorprop ((S)-2-(2,4-dichlorophenoxy)propionate)(S-2,4-DP) and S-mecoprop ((S)-2-(4-chloro-2-methylphenoxy)propionate)(S-2,4-MCPP). It can also accept (RS)-2-(4-chlorophenoxy)propionate, (RS)-2-(m-chlorophenoxy)propionate and phenoxyacetate derivatives such as 2,4-dichlorophenoxyacetate (2,4-D), however it can only accept 2-oxoglutarate as oxygen acceptor. The chain is (S)-phenoxypropionate/alpha-ketoglutarate-dioxygenase from Delftia acidovorans (Pseudomonas acidovorans).